The following is a 478-amino-acid chain: NADH-quinone oxidoreductase subunit N (478 aa).

Helical transmembrane passes span 8–28 (LVLP…FGVW), 38–58 (ILWA…LGTG), 62–82 (AFGG…VILV), 106–126 (PILI…GDLM), 160–180 (FVLG…VYGF), 200–220 (IGLL…VSAV), 234–254 (PTPV…ALIA), 268–288 (WGQI…IAGI), 300–320 (SSIS…AAGV), 322–342 (SMLL…AFIL), 368–388 (AFAL…LGFF), 398–418 (IGAG…IGAF), and 445–465 (FAFL…MAGV).

It belongs to the complex I subunit 2 family. As to quaternary structure, NDH-1 is composed of 14 different subunits. Subunits NuoA, H, J, K, L, M, N constitute the membrane sector of the complex.

Its subcellular location is the cellular chromatophore membrane. The catalysed reaction is a quinone + NADH + 5 H(+)(in) = a quinol + NAD(+) + 4 H(+)(out). In terms of biological role, NDH-1 shuttles electrons from NADH, via FMN and iron-sulfur (Fe-S) centers, to quinones in the respiratory chain. The immediate electron acceptor for the enzyme in this species is believed to be ubiquinone. Couples the redox reaction to proton translocation (for every two electrons transferred, four hydrogen ions are translocated across the cytoplasmic membrane), and thus conserves the redox energy in a proton gradient. This chain is NADH-quinone oxidoreductase subunit N, found in Rhodobacter capsulatus (Rhodopseudomonas capsulata).